A 590-amino-acid polypeptide reads, in one-letter code: Aspartate--tRNA(Asp/Asn) ligase (590 aa).

Residue E175 coordinates L-aspartate. Residues 199–202 (QQYK) form an aspartate region. The L-aspartate site is built by R221 and H450. Residue 221–223 (RDE) participates in ATP binding. E484 contacts ATP. R491 contacts L-aspartate. 536 to 539 (GVDR) is a binding site for ATP.

Belongs to the class-II aminoacyl-tRNA synthetase family. Type 1 subfamily. Homodimer.

The protein resides in the cytoplasm. It catalyses the reaction tRNA(Asx) + L-aspartate + ATP = L-aspartyl-tRNA(Asx) + AMP + diphosphate. Functionally, aspartyl-tRNA synthetase with relaxed tRNA specificity since it is able to aspartylate not only its cognate tRNA(Asp) but also tRNA(Asn). Reaction proceeds in two steps: L-aspartate is first activated by ATP to form Asp-AMP and then transferred to the acceptor end of tRNA(Asp/Asn). The sequence is that of Aspartate--tRNA(Asp/Asn) ligase from Rhodopseudomonas palustris (strain HaA2).